Reading from the N-terminus, the 705-residue chain is MTVTASGGSSLARPQLYQTVPGSTIVQAEQQDRFPQQGELRELSSYFQSGLKRLAIAEIITRNSDTIVSRAANRIFVGGSPLAYIERPKVDPRNLRSAEEQRAREAKLGTVTFVESSGGGGFFSGLTAALGGAGAVRIPSGFRPINVARYGPRNMQKSLRDMSWFLRYITYAIVAGDPNILVVNVRGLREIIEKACSTPATLVALQDMRATSAGYFRNDPEAQQLVKDYFDVLIREFEAPTPSLKQRQRFAEDQQGLALPQSYANAAERRPKFVIKSTLSTVEKNEAIKAAYRQVFERDITRAYSQKVSDLESKVKNGEISTKEFIRRLGKSPLYRQQFHDRFVNSRVIELAFRHFLGRGISSAEEFTRYFDLLSAKGFAALIDALVDSQEYADYFGEETVPYLRGLGQEAQECRNWGVQQELFKYSAPFVKVPQFVTLFGEYKQPLLDQHPYGAGNDPLEIQFGAIFPSRTVNNRTNPAPFGKDTRRLLVSKGGVNNQVGSAAFQQSGTTPTKIFKLTQVAAGSSSIRSKSVGNPSIRQTESTTQAVIRAAYRQVFGRDLYEGQRLTVPEIKLENGEITVREFVRQIAKSETFRKLYWNNLYVVKAVEYIHRRLLGRPTTGRAEINAYFDISAKKGFYALVDAILDSPEYIAAFGEDTVPYERYITPKGLALRSVRGLEASEKVKASLRPAAGAQERRPEVGRR.

A phycobilin-like 1 region spans residues 18-76 (QTVPGSTIVQAEQQDRFPQQGELRELSSYFQSGLKRLAIAEIITRNSDTIVSRAANRIF). Residues 77-145 (VGGSPLAYIE…VRIPSGFRPI (69 aa)) form a phycobilin-like loop region. Residues 146-238 (NVARYGPRNM…YFDVLIREFE (93 aa)) are phycobilin-like 2. C196 lines the (2R,3E)-phycocyanobilin pocket. 2 consecutive PBS-linker domains span residues 253-433 (DQQG…FVKV) and 514-691 (KIFK…SLRP). Residues 685–705 (VKASLRPAAGAQERRPEVGRR) form a disordered region. Residues 696–705 (QERRPEVGRR) show a composition bias toward basic and acidic residues.

This sequence belongs to the phycobilisome linker protein family. Phycobilisomes of this organism are composed of a two cylinder core, from which six rods radiate. The core is mainly composed of allophycocyanin alpha and beta chains, and of three minor components: the allophycocyanin alpha-B chain, a 18.3 kDa polypeptide, and the anchor polypeptide L-CM. Contains one covalently linked bilin chromophore. This protein autochromophorylates.

The protein localises to the cellular thylakoid membrane. In terms of biological role, this protein is postulated to act both as terminal energy acceptor (by its phycobilin-like domains) and as a linker polypeptide (by its repeats and arms) that stabilizes the phycobilisome core architecture. Has intrinsic bilin lyase activity. The chain is Phycobiliprotein ApcE (apcE) from Synechococcus sp. (strain ATCC 27144 / PCC 6301 / SAUG 1402/1) (Anacystis nidulans).